The primary structure comprises 340 residues: Phosphoribosylformylglycinamidine cyclo-ligase (340 aa).

Belongs to the AIR synthase family.

It localises to the cytoplasm. The enzyme catalyses 2-formamido-N(1)-(5-O-phospho-beta-D-ribosyl)acetamidine + ATP = 5-amino-1-(5-phospho-beta-D-ribosyl)imidazole + ADP + phosphate + H(+). It functions in the pathway purine metabolism; IMP biosynthesis via de novo pathway; 5-amino-1-(5-phospho-D-ribosyl)imidazole from N(2)-formyl-N(1)-(5-phospho-D-ribosyl)glycinamide: step 2/2. This is Phosphoribosylformylglycinamidine cyclo-ligase from Streptococcus pyogenes serotype M12 (strain MGAS2096).